The following is a 569-amino-acid chain: Tetratricopeptide repeat protein 22 (569 aa).

7 TPR repeats span residues Pro66–Asn99, Asn101–Ala133, Ala203–Val237, Lys260–Gln294, Pro295–Pro328, Phe383–Phe418, and Pro432–Gly465.

This chain is Tetratricopeptide repeat protein 22 (TTC22), found in Homo sapiens (Human).